The sequence spans 376 residues: Cyclin-dependent kinase 9-B (376 aa).

The Protein kinase domain occupies 19–319 (YERLAKIGQG…SDEALNHDFF (301 aa)). ATP is bound by residues 25 to 33 (IGQGTFGEV) and Lys48. Asp153 (proton acceptor) is an active-site residue. The disordered stretch occupies residues 345–376 (PPRRRGGHMPQQPANQARNPAATNQSEFDRVF). A compositionally biased stretch (low complexity) spans 354-369 (PQQPANQARNPAATNQ).

This sequence belongs to the protein kinase superfamily. CMGC Ser/Thr protein kinase family. CDC2/CDKX subfamily. In terms of assembly, associates with cyclin-T to form P-TEFb.

The protein localises to the nucleus. It carries out the reaction L-seryl-[protein] + ATP = O-phospho-L-seryl-[protein] + ADP + H(+). It catalyses the reaction L-threonyl-[protein] + ATP = O-phospho-L-threonyl-[protein] + ADP + H(+). The catalysed reaction is [DNA-directed RNA polymerase] + ATP = phospho-[DNA-directed RNA polymerase] + ADP + H(+). Functionally, member of the cyclin-dependent kinase pair (CDK9/cyclin-T) complex, also called positive transcription elongation factor B (P-TEFb), which is proposed to facilitate the transition from abortive to production elongation by phosphorylating the CTD (C-terminal domain) of the large subunit of RNA polymerase II (RNAP II) and SUPT5H. This is Cyclin-dependent kinase 9-B (cdk9-b) from Xenopus laevis (African clawed frog).